Consider the following 340-residue polypeptide: Tetraacyldisaccharide 4'-kinase (340 aa).

47-54 is a binding site for ATP; the sequence is SVGGTGKT.

This sequence belongs to the LpxK family.

The enzyme catalyses a lipid A disaccharide + ATP = a lipid IVA + ADP + H(+). It participates in glycolipid biosynthesis; lipid IV(A) biosynthesis; lipid IV(A) from (3R)-3-hydroxytetradecanoyl-[acyl-carrier-protein] and UDP-N-acetyl-alpha-D-glucosamine: step 6/6. Its function is as follows. Transfers the gamma-phosphate of ATP to the 4'-position of a tetraacyldisaccharide 1-phosphate intermediate (termed DS-1-P) to form tetraacyldisaccharide 1,4'-bis-phosphate (lipid IVA). In Flavobacterium johnsoniae (strain ATCC 17061 / DSM 2064 / JCM 8514 / BCRC 14874 / CCUG 350202 / NBRC 14942 / NCIMB 11054 / UW101) (Cytophaga johnsonae), this protein is Tetraacyldisaccharide 4'-kinase.